The sequence spans 127 residues: V-type proton ATPase subunit F (127 aa).

The protein belongs to the V-ATPase F subunit family. In terms of assembly, V-ATPase is a heteromultimeric enzyme made up of two complexes: the ATP-hydrolytic V1 complex and the proton translocation V0 complex. The V1 complex consists of three catalytic AB heterodimers that form a heterohexamer, three peripheral stalks each consisting of EG heterodimers, one central rotor including subunits D and F, and the regulatory subunits C and H. The proton translocation complex V0 consists of the proton transport subunit a, a ring of proteolipid subunits c9c'', rotary subunit d, subunits e and f, and the accessory subunits VhaAC45 and ATP6AP2.

Functionally, subunit of the V1 complex of vacuolar(H+)-ATPase (V-ATPase), a multisubunit enzyme composed of a peripheral complex (V1) that hydrolyzes ATP and a membrane integral complex (V0) that translocates protons. V-ATPase is responsible for acidifying and maintaining the pH of intracellular compartments and in some cell types, is targeted to the plasma membrane, where it is responsible for acidifying the extracellular environment. The chain is V-type proton ATPase subunit F from Aedes aegypti (Yellowfever mosquito).